The following is a 258-amino-acid chain: MGKKDKRWVLQRKNDHYYNLAKRRNYRSRATYKLFQLNEKFNLIKERNVVVDLGCAPGGWLQAARDIVGEDGFIVGIDLQTVKPLPHDNIIAIKGDMTKEEILKQAKDLLPEKPDVIICDASPNISGVWDVDHVRSLELTTMALMTATKMLKKGGNFVVKVFQGDLFEKYVQLVSEYFDKAFTTKPRASRDESAEVYVIGKRFNGKKFDMNSKSPIVKLLDTKPVEEEITSPSLRKEISKEDSGLMIKRIKEMRSKKE.

S-adenosyl-L-methionine contacts are provided by glycine 58, tryptophan 60, aspartate 78, aspartate 96, and aspartate 120. Lysine 160 functions as the Proton acceptor in the catalytic mechanism.

This sequence belongs to the class I-like SAM-binding methyltransferase superfamily. RNA methyltransferase RlmE family.

It localises to the cytoplasm. It carries out the reaction uridine(2552) in 23S rRNA + S-adenosyl-L-methionine = 2'-O-methyluridine(2552) in 23S rRNA + S-adenosyl-L-homocysteine + H(+). Specifically methylates the uridine in position 2552 of 23S rRNA at the 2'-O position of the ribose in the fully assembled 50S ribosomal subunit. This chain is Ribosomal RNA large subunit methyltransferase E, found in Methanococcus maripaludis (strain DSM 14266 / JCM 13030 / NBRC 101832 / S2 / LL).